A 261-amino-acid chain; its full sequence is Acetylglutamate kinase (261 aa).

Residues Gly41–Gly42, Arg63, and Asn157 each bind substrate.

The protein belongs to the acetylglutamate kinase family. ArgB subfamily.

It is found in the cytoplasm. It carries out the reaction N-acetyl-L-glutamate + ATP = N-acetyl-L-glutamyl 5-phosphate + ADP. It functions in the pathway amino-acid biosynthesis; L-arginine biosynthesis; N(2)-acetyl-L-ornithine from L-glutamate: step 2/4. Functionally, catalyzes the ATP-dependent phosphorylation of N-acetyl-L-glutamate. This chain is Acetylglutamate kinase, found in Koribacter versatilis (strain Ellin345).